The sequence spans 875 residues: Ubiquitin-protein ligase E3A (875 aa).

The segment at 44–83 (CGNEACTNEFCASCPTFLRMDNNAAAIKALELYKINAKLC) adopts a C4-type; atypical zinc-finger fold. The segment covering 175-186 (KEELKSLQAKDE) has biased composition (basic and acidic residues). The interval 175 to 226 (KEELKSLQAKDEDKDEDEKEKAACSAAAMEEDSEASSSRIGDSSQGDNNLQK) is disordered. Polar residues predominate over residues 213–225 (RIGDSSQGDNNLQ). Serine 218 is subject to Phosphoserine. The interval 401–418 (IPESSELTLQELLGEERR) is E6-binding. The interaction with HCV core protein stretch occupies residues 418 to 517 (RNKKGPRVDP…TVLYSLVQGQ (100 aa)). Residue tyrosine 659 is modified to Phosphotyrosine; by ABL1. The HECT domain occupies 776-875 (YDGGYTRDSV…ITYAKGFGML (100 aa)). The Glycyl thioester intermediate role is filled by cysteine 843.

In terms of assembly, the active form is probably a homotrimer. Binds UBQLN1 and UBQLN2. Interacts with the 26S proteasome. Interacts with BPY2. Interacts with HIF1AN, MAPK6 and NEURL4; interaction with MAPK6 may be mediated by NEURL4. Interacts with the proteasomal subunit PSMD4. Interacts with ESR1 and WBP2. Interacts with BMAL1. Interacts with ARC. (Microbial infection) Interacts with HCV core protein and targets it to degradation. As to quaternary structure, (Microbial infection) Interacts with the E6 protein of the cancer-associated human papillomavirus types 16 and 18. The E6/E6-AP complex binds to and targets the p53/TP53 tumor-suppressor protein for ubiquitin-mediated proteolysis. Phosphorylation at Tyr-659 by ABL1 impairs E3 ligase activity and protects p53/TP53 from degradation in (HPV)-infected cells.

The protein localises to the cytoplasm. It is found in the nucleus. The catalysed reaction is S-ubiquitinyl-[E2 ubiquitin-conjugating enzyme]-L-cysteine + [acceptor protein]-L-lysine = [E2 ubiquitin-conjugating enzyme]-L-cysteine + N(6)-ubiquitinyl-[acceptor protein]-L-lysine.. The protein operates within protein modification; protein ubiquitination. Functionally, E3 ubiquitin-protein ligase which accepts ubiquitin from an E2 ubiquitin-conjugating enzyme in the form of a thioester and transfers it to its substrates. Several substrates have been identified including the BMAL1, ARC, LAMTOR1, RAD23A and RAD23B, MCM7 (which is involved in DNA replication), annexin A1, the PML tumor suppressor, and the cell cycle regulator CDKN1B. Additionally, may function as a cellular quality control ubiquitin ligase by helping the degradation of the cytoplasmic misfolded proteins. Finally, UBE3A also promotes its own degradation in vivo. Plays an important role in the regulation of the circadian clock: involved in the ubiquitination of the core clock component BMAL1, leading to its proteasomal degradation. Acts as transcriptional coactivator of progesterone receptor PGR upon progesterone hormone activation. Acts as a regulator of synaptic development by mediating ubiquitination and degradation of ARC. Required for synaptic remodeling in neurons by mediating ubiquitination and degradation of LAMTOR1, thereby limiting mTORC1 signaling and activity-dependent synaptic remodeling. Synergizes with WBP2 in enhancing PGR activity. In terms of biological role, (Microbial infection) Catalyzes the high-risk human papilloma virus E6-mediated ubiquitination of p53/TP53, contributing to the neoplastic progression of cells infected by these viruses. The polypeptide is Ubiquitin-protein ligase E3A (Homo sapiens (Human)).